The primary structure comprises 489 residues: L-asparagine permease 1 (489 aa).

The next 12 membrane-spanning stretches (helical) occupy residues 25 to 45 (QLQM…GASG), 49 to 69 (KAGP…FLIL), 100 to 120 (AVGW…TTAI), 137 to 157 (ILAL…VEWF), 162 to 182 (FWAA…GTVF), 210 to 230 (WLPL…VELV), 255 to 275 (IAIF…YTAY), 289 to 309 (IGFH…ALSS), 344 to 364 (YGGI…NAFK), 369 to 389 (FEIV…TIVL), 413 to 433 (SPYS…TMAS), and 439 to 459 (TWTV…WYLV).

Belongs to the amino acid-polyamine-organocation (APC) superfamily. Amino acid transporter (AAT) (TC 2.A.3.1) family.

It is found in the cell membrane. The protein is L-asparagine permease 1 (ansP1) of Mycobacterium bovis (strain ATCC BAA-935 / AF2122/97).